Here is a 432-residue protein sequence, read N- to C-terminus: D-amino acid dehydrogenase 1 (432 aa).

An FAD-binding site is contributed by 3 to 17 (VLILGSGVVGTVSAY).

The protein belongs to the DadA oxidoreductase family. FAD serves as cofactor.

The enzyme catalyses a D-alpha-amino acid + A + H2O = a 2-oxocarboxylate + AH2 + NH4(+). In terms of biological role, oxidative deamination of D-amino acids. The chain is D-amino acid dehydrogenase 1 (dadA1) from Pseudomonas putida (strain ATCC 47054 / DSM 6125 / CFBP 8728 / NCIMB 11950 / KT2440).